A 110-amino-acid chain; its full sequence is Proline-rich protein 15-like protein A (110 aa).

Disordered stretches follow at residues 29–51 (IAGD…TDSQ) and 65–110 (TKGR…KSGK). Basic residues predominate over residues 65–85 (TKGRHVKVSHSGRFKEKKRIR). Residues 100–110 (TTANENNKSGK) are compositionally biased toward polar residues.

Belongs to the PRR15 family.

This is Proline-rich protein 15-like protein A (prr15la) from Danio rerio (Zebrafish).